Consider the following 156-residue polypeptide: Small ribosomal subunit protein uS7 (156 aa).

The protein belongs to the universal ribosomal protein uS7 family. In terms of assembly, part of the 30S ribosomal subunit. Contacts proteins S9 and S11.

Functionally, one of the primary rRNA binding proteins, it binds directly to 16S rRNA where it nucleates assembly of the head domain of the 30S subunit. Is located at the subunit interface close to the decoding center, probably blocks exit of the E-site tRNA. The polypeptide is Small ribosomal subunit protein uS7 (Streptococcus agalactiae serotype Ia (strain ATCC 27591 / A909 / CDC SS700)).